The chain runs to 336 residues: MEGHLSDGLVEVGPNGRERYYDSSGYGRPDGAGVRLAPVEAAYLLARGDLDAVDGMGLEAFLADTPDLVVPFLVYRDLRERGFYVSPALEGWVADHAGIDFVVHPRGDGPWDGTVAYRVRVVDERGSVRLDSLGDVVLAVVDEESELTYLETDRPAVDGTSGLEADLTADGVLLEDRVLCWDAPPALYEQGFYGQRMDREDGPLQLSLLEAAHLAATGVLSVAGGAAAVEARGRDAEGERFDRRLTVYRTLRERGVVPKTGFKFGADFRTYADVDSVSELGHSELLVRVLPADATLSPRDVALDVRLAHGVRKRMVFALVDDGDEIRWVSVSRLTP.

Catalysis depends on residues tyrosine 271, histidine 282, and lysine 313.

The protein belongs to the tRNA-intron endonuclease family. Archaeal long subfamily. Homodimer.

It catalyses the reaction pretRNA = a 3'-half-tRNA molecule with a 5'-OH end + a 5'-half-tRNA molecule with a 2',3'-cyclic phosphate end + an intron with a 2',3'-cyclic phosphate and a 5'-hydroxyl terminus.. In terms of biological role, endonuclease that removes tRNA introns. Cleaves pre-tRNA at the 5'- and 3'-splice sites to release the intron. The products are an intron and two tRNA half-molecules bearing 2',3' cyclic phosphate and 5'-OH termini. Recognizes a pseudosymmetric substrate in which 2 bulged loops of 3 bases are separated by a stem of 4 bp. This Natronomonas pharaonis (strain ATCC 35678 / DSM 2160 / CIP 103997 / JCM 8858 / NBRC 14720 / NCIMB 2260 / Gabara) (Halobacterium pharaonis) protein is tRNA-splicing endonuclease.